We begin with the raw amino-acid sequence, 360 residues long: MQEKPNLLSLKKFYFPKEWSYPVNTISKHIRDTFDEAVECGLFDGSNEKHFAYANGVLNCVTWFYPKYDYEQLMVAAAIMQWIFVLDDFLERDHMTDEKQQYCVRKYEDILIQGRSSPYLSTLDDCCLTPLDKYTLVLRKRLLKPSENRIETFNIFVHYLREWFFSIIPLKKSKGDHHTDSVPYEVYSFIRTINIGLYFVVGVNSVAVDTKVHGSFWINPIWQRMVRHAAKQIIIFNDCVSYAKEINHDCAGENCLYILQKKLNLSFEKVYEHVVEEAKQAIFEIQKDEVLLVETLSYLPEEQMNGVKYLIEQLREIVVGNRDWALMTPRYVHNDSPFIETRGTDPSIVPYEKILNSNLY.

The DDxx(x)D/E motif motif lies at 87–92; sequence DDFLER. The NDxxSxxxD/E motif signature appears at 237-245; it reads NDCVSYAKE.

The protein belongs to the terpene synthase family.

Its function is as follows. Terpene synthase that converts its substrate farnesyl diphosphate (FPP) into 2 yet unidentified sesquiterpenes. The sequence is that of Terpene synthase 5 from Dictyostelium purpureum (Slime mold).